The following is a 297-amino-acid chain: Phosphatidylserine decarboxylase proenzyme (297 aa).

Catalysis depends on charge relay system; for autoendoproteolytic cleavage activity residues Asp-112, His-168, and Ser-255. Residue Ser-255 is the Schiff-base intermediate with substrate; via pyruvic acid; for decarboxylase activity of the active site. At Ser-255 the chain carries Pyruvic acid (Ser); by autocatalysis.

This sequence belongs to the phosphatidylserine decarboxylase family. PSD-B subfamily. Prokaryotic type II sub-subfamily. Heterodimer of a large membrane-associated beta subunit and a small pyruvoyl-containing alpha subunit. Pyruvate is required as a cofactor. Is synthesized initially as an inactive proenzyme. Formation of the active enzyme involves a self-maturation process in which the active site pyruvoyl group is generated from an internal serine residue via an autocatalytic post-translational modification. Two non-identical subunits are generated from the proenzyme in this reaction, and the pyruvate is formed at the N-terminus of the alpha chain, which is derived from the carboxyl end of the proenzyme. The autoendoproteolytic cleavage occurs by a canonical serine protease mechanism, in which the side chain hydroxyl group of the serine supplies its oxygen atom to form the C-terminus of the beta chain, while the remainder of the serine residue undergoes an oxidative deamination to produce ammonia and the pyruvoyl prosthetic group on the alpha chain. During this reaction, the Ser that is part of the protease active site of the proenzyme becomes the pyruvoyl prosthetic group, which constitutes an essential element of the active site of the mature decarboxylase.

The protein localises to the cell membrane. The enzyme catalyses a 1,2-diacyl-sn-glycero-3-phospho-L-serine + H(+) = a 1,2-diacyl-sn-glycero-3-phosphoethanolamine + CO2. It functions in the pathway phospholipid metabolism; phosphatidylethanolamine biosynthesis; phosphatidylethanolamine from CDP-diacylglycerol: step 2/2. Its function is as follows. Catalyzes the formation of phosphatidylethanolamine (PtdEtn) from phosphatidylserine (PtdSer). In Clostridium tetani (strain Massachusetts / E88), this protein is Phosphatidylserine decarboxylase proenzyme.